We begin with the raw amino-acid sequence, 332 residues long: 2,3-diketo-L-gulonate reductase (332 aa).

Histidine 44 serves as the catalytic Proton donor. Residues 168–174 (ITMVDMS), 224–225 (WK), and 304–306 (GHE) each bind NAD(+).

Belongs to the LDH2/MDH2 oxidoreductase family. DlgD subfamily. As to quaternary structure, homodimer.

The protein localises to the cytoplasm. The catalysed reaction is 3-dehydro-L-gulonate + NAD(+) = 2,3-dioxo-L-gulonate + NADH + H(+). The enzyme catalyses 3-dehydro-L-gulonate + NADP(+) = 2,3-dioxo-L-gulonate + NADPH + H(+). Catalyzes the reduction of 2,3-diketo-L-gulonate in the presence of NADH, to form 3-keto-L-gulonate. The sequence is that of 2,3-diketo-L-gulonate reductase from Escherichia coli O17:K52:H18 (strain UMN026 / ExPEC).